A 152-amino-acid polypeptide reads, in one-letter code: D-aminoacyl-tRNA deacylase (152 aa).

The short motif at 137-138 (GP) is the Gly-cisPro motif, important for rejection of L-amino acids element.

It belongs to the DTD family. Homodimer.

Its subcellular location is the cytoplasm. It catalyses the reaction glycyl-tRNA(Ala) + H2O = tRNA(Ala) + glycine + H(+). It carries out the reaction a D-aminoacyl-tRNA + H2O = a tRNA + a D-alpha-amino acid + H(+). Functionally, an aminoacyl-tRNA editing enzyme that deacylates mischarged D-aminoacyl-tRNAs. Also deacylates mischarged glycyl-tRNA(Ala), protecting cells against glycine mischarging by AlaRS. Acts via tRNA-based rather than protein-based catalysis; rejects L-amino acids rather than detecting D-amino acids in the active site. By recycling D-aminoacyl-tRNA to D-amino acids and free tRNA molecules, this enzyme counteracts the toxicity associated with the formation of D-aminoacyl-tRNA entities in vivo and helps enforce protein L-homochirality. This is D-aminoacyl-tRNA deacylase from Methylibium petroleiphilum (strain ATCC BAA-1232 / LMG 22953 / PM1).